Consider the following 343-residue polypeptide: tRNA N6-adenosine threonylcarbamoyltransferase (343 aa).

The Fe cation site is built by histidine 111 and histidine 115. Substrate is bound by residues 133-137 (AVSGG), aspartate 166, glycine 179, aspartate 183, and asparagine 273. Aspartate 301 serves as a coordination point for Fe cation.

The protein belongs to the KAE1 / TsaD family. Requires Fe(2+) as cofactor.

The protein localises to the cytoplasm. It carries out the reaction L-threonylcarbamoyladenylate + adenosine(37) in tRNA = N(6)-L-threonylcarbamoyladenosine(37) in tRNA + AMP + H(+). In terms of biological role, required for the formation of a threonylcarbamoyl group on adenosine at position 37 (t(6)A37) in tRNAs that read codons beginning with adenine. Is involved in the transfer of the threonylcarbamoyl moiety of threonylcarbamoyl-AMP (TC-AMP) to the N6 group of A37, together with TsaE and TsaB. TsaD likely plays a direct catalytic role in this reaction. The polypeptide is tRNA N6-adenosine threonylcarbamoyltransferase (Geotalea uraniireducens (strain Rf4) (Geobacter uraniireducens)).